An 805-amino-acid polypeptide reads, in one-letter code: Ubiquitin carboxyl-terminal hydrolase 10-B (805 aa).

Disordered stretches follow at residues 136 to 173 (AIPDGSGNADSDGTSGTGQRERKKKKKRPPGYYSYLEG) and 284 to 305 (DTTENLGVTNGQTLESPEEDTV). 2 stretches are compositionally biased toward polar residues: residues 143 to 153 (NADSDGTSGTG) and 284 to 298 (DTTENLGVTNGQTLE). In terms of domain architecture, USP spans 422-802 (RGLINKGNWC…TAYLLYYRRV (381 aa)). The Nucleophile role is filled by cysteine 431. The interval 573–600 (EEVNKEEQEGSDEEWEQVGPRNKSSVTR) is disordered. Histidine 756 acts as the Proton acceptor in catalysis.

It belongs to the peptidase C19 family. USP10 subfamily.

Its subcellular location is the cytoplasm. The protein resides in the nucleus. The catalysed reaction is Thiol-dependent hydrolysis of ester, thioester, amide, peptide and isopeptide bonds formed by the C-terminal Gly of ubiquitin (a 76-residue protein attached to proteins as an intracellular targeting signal).. Hydrolase that can remove conjugated ubiquitin from target proteins such as p53/tp53, rps2/us5, rps3/us3, rps10/eS10, becn1, snx3 and cftr. Acts as an essential regulator of p53/tp53 stability: in unstressed cells, specifically deubiquitinates p53/tp53 in the cytoplasm, leading to counteracts MDM2 action and stabilize p53/tp53. Following DNA damage, translocates to the nucleus and deubiquitinates p53/tp53, leading to regulate the p53/TP53-dependent DNA damage response. Component of a regulatory loop that controls autophagy and p53/tp53 levels. Plays a key role in 40S ribosome subunit recycling when a ribosome has stalled during translation: acts both by inhibiting formation of stress granules, which store stalled translation pre-initiation complexes, and mediating deubiquitination of 40S ribosome subunits. Deubiquitinates cftr in early endosomes, enhancing its endocytic recycling. This is Ubiquitin carboxyl-terminal hydrolase 10-B (usp10-b) from Xenopus laevis (African clawed frog).